A 142-amino-acid chain; its full sequence is Universal stress protein C (142 aa).

Belongs to the universal stress protein A family.

The protein resides in the cytoplasm. In terms of biological role, required for resistance to DNA-damaging agents. The sequence is that of Universal stress protein C (uspC) from Escherichia coli O157:H7.